We begin with the raw amino-acid sequence, 453 residues long: Carbamoyl phosphate synthase arginine-specific small chain (453 aa).

Residues 1 to 28 (MFARVFKAMPARASALTSVNASIQARFM) constitute a mitochondrion transit peptide. Residues 219–406 (HVAVIDCGVK…IDSVKKYKAS (188 aa)) form the Glutamine amidotransferase type-1 domain. Residue C295 is the Nucleophile of the active site. Residues H379 and E381 contribute to the active site.

The protein belongs to the CarA family. Heterodimer composed of 2 chains; the small (or glutamine) chain promotes the hydrolysis of glutamine to ammonia, which is used by the large (or ammonia) chain to synthesize carbamoyl phosphate.

The protein resides in the mitochondrion matrix. It carries out the reaction hydrogencarbonate + L-glutamine + 2 ATP + H2O = carbamoyl phosphate + L-glutamate + 2 ADP + phosphate + 2 H(+). The catalysed reaction is L-glutamine + H2O = L-glutamate + NH4(+). It functions in the pathway amino-acid biosynthesis; L-arginine biosynthesis; carbamoyl phosphate from bicarbonate: step 1/1. In terms of biological role, small subunit of the arginine-specific carbamoyl phosphate synthase (CPSase). CPSase catalyzes the formation of carbamoyl phosphate from the ammonia moiety of glutamine, carbonate, and phosphate donated by ATP, the first step of the arginine biosynthetic pathway. The small subunit (glutamine amidotransferase) binds and cleaves glutamine to supply the large subunit with the substrate ammonia. The chain is Carbamoyl phosphate synthase arginine-specific small chain (cpa1) from Neosartorya fischeri (strain ATCC 1020 / DSM 3700 / CBS 544.65 / FGSC A1164 / JCM 1740 / NRRL 181 / WB 181) (Aspergillus fischerianus).